Reading from the N-terminus, the 292-residue chain is Mitochondrial fission regulator 1-like (292 aa).

Phosphothreonine is present on Thr30. Ser41 bears the Phosphoserine mark. Ser103 is subject to Phosphoserine; by AMPK. Ser110, Ser224, and Ser225 each carry phosphoserine. Residue Ser238 is modified to Phosphoserine; by AMPK. 2 positions are modified to phosphoserine: Ser261 and Ser273.

This sequence belongs to the MTFR1 family. In terms of processing, phosphorylated by AMPK. Upon stress, phosphorylation at Ser-103 and Ser-238 by AMPK is sufficient to induce mitochondrial fragmentation.

It localises to the mitochondrion outer membrane. In terms of biological role, mitochondrial protein required for adaptation of miochondrial dynamics to metabolic changes. Regulates mitochondrial morphology at steady state and mediates AMPK-dependent stress-induced mitochondrial fragmentation via the control of OPA1 levels. The sequence is that of Mitochondrial fission regulator 1-like from Homo sapiens (Human).